Here is a 221-residue protein sequence, read N- to C-terminus: Urease accessory protein UreE (221 aa).

Positions 171 to 180 (HHGHDHDHGH) are enriched in basic and acidic residues. Positions 171-221 (HHGHDHDHGHSHSHSHSHSHSHSHSHDHDHDHDHEHDVKGHVHGPGCGHKH) are disordered. Basic residues predominate over residues 181–193 (SHSHSHSHSHSHS). Residues 194–210 (HSHDHDHDHDHEHDVKG) are compositionally biased toward basic and acidic residues.

Belongs to the UreE family.

Its subcellular location is the cytoplasm. Its function is as follows. Involved in urease metallocenter assembly. Binds nickel. Probably functions as a nickel donor during metallocenter assembly. The polypeptide is Urease accessory protein UreE (Cupriavidus pinatubonensis (strain JMP 134 / LMG 1197) (Cupriavidus necator (strain JMP 134))).